Consider the following 124-residue polypeptide: MIGLSYLLVQVVSFAGILVIDHRWKLAAFRAPAAAALAVTASVALLLTWDVLGVRSGVFFRGQTDFMTGLLVAPEIPFEEVVFLAFLSHLALVCAAGVSRAVDHARDSRAARASRPSRMTGERR.

Helical transmembrane passes span 1 to 21 (MIGLSYLLVQVVSFAGILVID), 34 to 54 (AAALAVTASVALLLTWDVLGV), and 78 to 98 (FEEVVFLAFLSHLALVCAAGV).

This sequence belongs to the lycopene beta-cyclase family. In terms of assembly, may form a complex with LbtBC.

Its subcellular location is the cell membrane. It participates in carotenoid biosynthesis. Its function is as follows. Involved in the biosynthesis of C(50) beta-cyclic carotenoids. May have C(50) carotenoid beta-cyclase activity and produce the C(50) beta-cyclic carotenoid C.p.450 from the C(50) carotenoid dihydrobisanhydrobacterioruberin (DH-BABR). This is Putative C(50) carotenoid beta-cyclase subunit A from Dietzia sp. (strain CQ4).